We begin with the raw amino-acid sequence, 573 residues long: Potassium-transporting ATPase potassium-binding subunit (573 aa).

A run of 10 helical transmembrane segments spans residues 6-26 (ILFALFIVTIALITKPLGSYI), 66-86 (FFSLVSFSVMAFIFVLVILLL), 135-155 (ALAVQNFVSAAVGLCVAIALI), 177-197 (VFWILLPISIVIAIVYIFQGV), 257-277 (IQMVSIFAIAAALTYTFGKWV), 283-303 (GWLIFGVMLVLFIISLVVMTI), 382-402 (IFGGVGAGFYGFFMFLMLAVF), 428-448 (MFALLISLCCVLVFTGLAAVI), 493-513 (ITIALSMLIGRFGVIFAVIML), and 537-557 (FIFAILVFFTILLIGGLTIFP).

Belongs to the KdpA family. As to quaternary structure, the system is composed of three essential subunits: KdpA, KdpB and KdpC.

Its subcellular location is the cell inner membrane. Functionally, part of the high-affinity ATP-driven potassium transport (or Kdp) system, which catalyzes the hydrolysis of ATP coupled with the electrogenic transport of potassium into the cytoplasm. This subunit binds the periplasmic potassium ions and delivers the ions to the membrane domain of KdpB through an intramembrane tunnel. The sequence is that of Potassium-transporting ATPase potassium-binding subunit from Francisella tularensis subsp. tularensis (strain WY96-3418).